The following is a 183-amino-acid chain: ATP synthase subunit b, chloroplastic (183 aa).

A helical transmembrane segment spans residues 28–48; sequence DIFEANVINILLLLFGLIYVL.

It belongs to the ATPase B chain family. As to quaternary structure, F-type ATPases have 2 components, F(1) - the catalytic core - and F(0) - the membrane proton channel. F(1) has five subunits: alpha(3), beta(3), gamma(1), delta(1), epsilon(1). F(0) has four main subunits: a(1), b(1), b'(1) and c(10-14). The alpha and beta chains form an alternating ring which encloses part of the gamma chain. F(1) is attached to F(0) by a central stalk formed by the gamma and epsilon chains, while a peripheral stalk is formed by the delta, b and b' chains.

Its subcellular location is the plastid. The protein localises to the chloroplast thylakoid membrane. In terms of biological role, f(1)F(0) ATP synthase produces ATP from ADP in the presence of a proton or sodium gradient. F-type ATPases consist of two structural domains, F(1) containing the extramembraneous catalytic core and F(0) containing the membrane proton channel, linked together by a central stalk and a peripheral stalk. During catalysis, ATP synthesis in the catalytic domain of F(1) is coupled via a rotary mechanism of the central stalk subunits to proton translocation. Component of the F(0) channel, it forms part of the peripheral stalk, linking F(1) to F(0). The chain is ATP synthase subunit b, chloroplastic from Pyropia yezoensis (Susabi-nori).